Here is a 705-residue protein sequence, read N- to C-terminus: Polyribonucleotide nucleotidyltransferase (705 aa).

2 residues coordinate Mg(2+): Asp486 and Asp492. The region spanning Pro553 to Ile612 is the KH domain. Positions Asn622 to Thr690 constitute an S1 motif domain.

The protein belongs to the polyribonucleotide nucleotidyltransferase family. As to quaternary structure, component of the RNA degradosome, which is a multiprotein complex involved in RNA processing and mRNA degradation. Mg(2+) serves as cofactor.

It is found in the cytoplasm. It carries out the reaction RNA(n+1) + phosphate = RNA(n) + a ribonucleoside 5'-diphosphate. Involved in mRNA degradation. Catalyzes the phosphorolysis of single-stranded polyribonucleotides processively in the 3'- to 5'-direction. The sequence is that of Polyribonucleotide nucleotidyltransferase from Wigglesworthia glossinidia brevipalpis.